Consider the following 742-residue polypeptide: 2'-5'-oligoadenylate synthase 2 (742 aa).

The disordered stretch occupies residues 1–35 (MGNWLTGNWSSDRSSGYSSGWSPGGSSGVPSGPVH). G2 carries the N-myristoyl glycine lipid modification. Positions 10 to 21 (SSDRSSGYSSGW) are enriched in low complexity. OAS domain stretches follow at residues 60 to 374 (VPSQ…YWDV) and 382 to 721 (TPSH…WKVP). At K417 the chain carries N6-acetyllysine. S436 is an ATP binding site. Mg(2+) contacts are provided by D448, D450, and D519. ATP-binding residues include R582 and K585.

It belongs to the 2-5A synthase family. In terms of assembly, homodimer. The cofactor is Mg(2+). Myristoylation is not essential for its activity. Post-translationally, glycosylated. Glycosylation is essential for its activity. In terms of tissue distribution, expressed in the uterus. Expressed in mammary glands: expressed at low level before the establishment of lactation, then expression strongly increases, and subsequently decreases during early involution.

Its subcellular location is the cytoplasm. It localises to the perinuclear region. The enzyme catalyses 3 ATP = 5'-triphosphoadenylyl-(2'-&gt;5')-adenylyl-(2'-&gt;5')-adenosine + 2 diphosphate. Produced as a latent enzyme which is activated by double stranded RNA (dsRNA) generated during the course of viral infection. The dsRNA activator must be at least 15 nucleotides long, and no modification of the 2'-hydroxyl group is tolerated. ssRNA or dsDNA do not act as activators. Strongly inhibited by copper, iron and zinc ions. Partially inhibited by cobalt and nickel ions. Its function is as follows. Interferon-induced, dsRNA-activated antiviral enzyme which plays a critical role in cellular innate antiviral response. Activated by detection of double stranded RNA (dsRNA): polymerizes higher oligomers of 2'-5'-oligoadenylates (2-5A) from ATP which then bind to the inactive monomeric form of ribonuclease L (RNASEL) leading to its dimerization and subsequent activation. Activation of RNASEL leads to degradation of cellular as well as viral RNA, resulting in the inhibition of protein synthesis, thus terminating viral replication. Can mediate the antiviral effect via the classical RNASEL-dependent pathway or an alternative antiviral pathway independent of RNASEL. In addition, it may also play a role in other cellular processes such as apoptosis, cell growth, differentiation and gene regulation. May act as a negative regulator of lactation, stopping lactation in virally infected mammary gland lobules, thereby preventing transmission of viruses to neonates. Non-infected lobules would not be affected, allowing efficient pup feeding during infection. This chain is 2'-5'-oligoadenylate synthase 2, found in Mus musculus (Mouse).